Here is a 143-residue protein sequence, read N- to C-terminus: Large ribosomal subunit protein mL51 (143 aa).

A mitochondrion-targeting transit peptide spans 1-52 (MAALVRGLMRRVAALPQAVRSVSGGGQRHEPYRPLPITSPLAGLPRNFRVRE).

The protein belongs to the mitochondrion-specific ribosomal protein mL51 family. Component of the mitochondrial ribosome large subunit (39S) which comprises a 16S rRNA and about 50 distinct proteins.

It localises to the mitochondrion. This chain is Large ribosomal subunit protein mL51 (MRPL51), found in Gallus gallus (Chicken).